Here is a 359-residue protein sequence, read N- to C-terminus: Probable dual-specificity RNA methyltransferase RlmN (359 aa).

The active-site Proton acceptor is the glutamate 91. In terms of domain architecture, Radical SAM core spans 97–329 (QHYGHSVCVT…KKNGVNCVVR (233 aa)). Cysteine 104 and cysteine 340 form a disulfide bridge. [4Fe-4S] cluster-binding residues include cysteine 111, cysteine 115, and cysteine 118. Residues 163-164 (GE), serine 195, 218-220 (SLH), and asparagine 296 contribute to the S-adenosyl-L-methionine site. Cysteine 340 (S-methylcysteine intermediate) is an active-site residue.

This sequence belongs to the radical SAM superfamily. RlmN family. The cofactor is [4Fe-4S] cluster.

Its subcellular location is the cytoplasm. It catalyses the reaction adenosine(2503) in 23S rRNA + 2 reduced [2Fe-2S]-[ferredoxin] + 2 S-adenosyl-L-methionine = 2-methyladenosine(2503) in 23S rRNA + 5'-deoxyadenosine + L-methionine + 2 oxidized [2Fe-2S]-[ferredoxin] + S-adenosyl-L-homocysteine. The enzyme catalyses adenosine(37) in tRNA + 2 reduced [2Fe-2S]-[ferredoxin] + 2 S-adenosyl-L-methionine = 2-methyladenosine(37) in tRNA + 5'-deoxyadenosine + L-methionine + 2 oxidized [2Fe-2S]-[ferredoxin] + S-adenosyl-L-homocysteine. Specifically methylates position 2 of adenine 2503 in 23S rRNA and position 2 of adenine 37 in tRNAs. In Streptococcus pyogenes serotype M5 (strain Manfredo), this protein is Probable dual-specificity RNA methyltransferase RlmN.